We begin with the raw amino-acid sequence, 121 residues long: Non-specific lipid-transfer protein 9 (121 aa).

The signal sequence occupies residues Met1–Ser27. Cystine bridges form between Cys31–Cys80, Cys41–Cys57, Cys58–Cys102, and Cys78–Cys116.

Belongs to the plant LTP family.

In terms of biological role, plant non-specific lipid-transfer proteins transfer phospholipids as well as galactolipids across membranes. May play a role in wax or cutin deposition in the cell walls of expanding epidermal cells and certain secretory tissues. The sequence is that of Non-specific lipid-transfer protein 9 (LTP9) from Arabidopsis thaliana (Mouse-ear cress).